Consider the following 369-residue polypeptide: Leucine carboxyl methyltransferase 1 (369 aa).

S-adenosyl-L-methionine is bound by residues Arg84, Gly108, Asp132, 187 to 188 (DL), and Glu215.

The protein belongs to the methyltransferase superfamily. LCMT family.

It catalyses the reaction [phosphatase 2A protein]-C-terminal L-leucine + S-adenosyl-L-methionine = [phosphatase 2A protein]-C-terminal L-leucine methyl ester + S-adenosyl-L-homocysteine. In terms of biological role, methylates the carboxyl group of the C-terminal leucine residue of protein phosphatase 2A catalytic subunits to form alpha-leucine ester residues. This is Leucine carboxyl methyltransferase 1 (PPM1) from Debaryomyces hansenii (strain ATCC 36239 / CBS 767 / BCRC 21394 / JCM 1990 / NBRC 0083 / IGC 2968) (Yeast).